Reading from the N-terminus, the 364-residue chain is Putative protein C31H2.4 (364 aa).

2 VOC domains span residues 6-134 (AIHH…LGEF) and 161-320 (LMDH…IFSK). Fe cation is bound by residues His164, His248, and Glu331.

The protein belongs to the 4HPPD family. Requires Fe cation as cofactor.

The sequence is that of Putative protein C31H2.4 from Caenorhabditis elegans.